The sequence spans 87 residues: Sec-independent protein translocase protein TatA (87 aa).

A helical transmembrane segment spans residues 3-23 (IFGIGLPEMIVILVVALLIFG). The disordered stretch occupies residues 61–87 (EGVKVSTSASEPEKVVDVSSATNTNKN).

This sequence belongs to the TatA/E family. In terms of assembly, forms a complex with TatC.

The protein localises to the cell inner membrane. Part of the twin-arginine translocation (Tat) system that transports large folded proteins containing a characteristic twin-arginine motif in their signal peptide across membranes. TatA could form the protein-conducting channel of the Tat system. This is Sec-independent protein translocase protein TatA from Trichodesmium erythraeum (strain IMS101).